Here is a 192-residue protein sequence, read N- to C-terminus: Fe/S biogenesis protein NfuA (192 aa).

Residues Cys149 and Cys152 each contribute to the [4Fe-4S] cluster site.

This sequence belongs to the NfuA family. As to quaternary structure, homodimer. [4Fe-4S] cluster serves as cofactor.

Functionally, involved in iron-sulfur cluster biogenesis. Binds a 4Fe-4S cluster, can transfer this cluster to apoproteins, and thereby intervenes in the maturation of Fe/S proteins. Could also act as a scaffold/chaperone for damaged Fe/S proteins. This chain is Fe/S biogenesis protein NfuA, found in Shewanella baltica (strain OS223).